Consider the following 427-residue polypeptide: Glutamate-1-semialdehyde 2,1-aminomutase (427 aa).

N6-(pyridoxal phosphate)lysine is present on K266.

Belongs to the class-III pyridoxal-phosphate-dependent aminotransferase family. HemL subfamily. Homodimer. Pyridoxal 5'-phosphate serves as cofactor.

The protein localises to the cytoplasm. It carries out the reaction (S)-4-amino-5-oxopentanoate = 5-aminolevulinate. It functions in the pathway porphyrin-containing compound metabolism; protoporphyrin-IX biosynthesis; 5-aminolevulinate from L-glutamyl-tRNA(Glu): step 2/2. The sequence is that of Glutamate-1-semialdehyde 2,1-aminomutase from Aromatoleum aromaticum (strain DSM 19018 / LMG 30748 / EbN1) (Azoarcus sp. (strain EbN1)).